Reading from the N-terminus, the 320-residue chain is Nucleotide-binding protein Psyc_0118 (320 aa).

32 to 39 is an ATP binding site; the sequence is GRSGSGKT. 82–85 is a GTP binding site; that stretch reads DIRT.

The protein belongs to the RapZ-like family.

Functionally, displays ATPase and GTPase activities. The sequence is that of Nucleotide-binding protein Psyc_0118 from Psychrobacter arcticus (strain DSM 17307 / VKM B-2377 / 273-4).